The primary structure comprises 490 residues: Aspartyl/glutamyl-tRNA(Asn/Gln) amidotransferase subunit B (490 aa).

The protein belongs to the GatB/GatE family. GatB subfamily. As to quaternary structure, heterotrimer of A, B and C subunits.

It carries out the reaction L-glutamyl-tRNA(Gln) + L-glutamine + ATP + H2O = L-glutaminyl-tRNA(Gln) + L-glutamate + ADP + phosphate + H(+). The catalysed reaction is L-aspartyl-tRNA(Asn) + L-glutamine + ATP + H2O = L-asparaginyl-tRNA(Asn) + L-glutamate + ADP + phosphate + 2 H(+). In terms of biological role, allows the formation of correctly charged Asn-tRNA(Asn) or Gln-tRNA(Gln) through the transamidation of misacylated Asp-tRNA(Asn) or Glu-tRNA(Gln) in organisms which lack either or both of asparaginyl-tRNA or glutaminyl-tRNA synthetases. The reaction takes place in the presence of glutamine and ATP through an activated phospho-Asp-tRNA(Asn) or phospho-Glu-tRNA(Gln). This is Aspartyl/glutamyl-tRNA(Asn/Gln) amidotransferase subunit B from Synechococcus sp. (strain JA-2-3B'a(2-13)) (Cyanobacteria bacterium Yellowstone B-Prime).